Consider the following 595-residue polypeptide: Glycine betaine transporter BetP (595 aa).

Residues 1–59 (MTTSDPNPKPIVEDAQPEQITATEELAGLLENPTNLEGKLADAEEEIILEGEDTQASLN) lie on the Cytoplasmic side of the membrane. Residues 60–80 (WSVIVPALVIVLATVVWGIGF) form a helical membrane-spanning segment. Over 81-98 (KDSFTNFASSALSAVVDN) the chain is Periplasmic. A helical membrane pass occupies residues 99–119 (LGWAFILFGTVFVFFIVVIAA). Residues 120 to 137 (SKFGTIRLGRIDEAPEFR) lie on the Cytoplasmic side of the membrane. A helical membrane pass occupies residues 138–158 (TVSWISMMFAAGMGIGLMFYG). Residues Ala147, Ala148, and Met150 each coordinate Na(+). 152–153 (IG) contributes to the glycine betaine binding site. Topologically, residues 159–185 (TTEPLTFYRNGVPGHDEHNVGVAMSTT) are periplasmic. The chain crosses the membrane as a helical span at residues 186–206 (MFHWTLHPWAIYAIVGLAIAY). Residues 207–236 (STFRVGRKQLLSSAFVPLIGEKGAEGWLGK) are Cytoplasmic-facing. A helical transmembrane segment spans residues 237-257 (LIDILAIIATVFGTACSLGLG). A glycine betaine-binding site is contributed by Ser253. Residues 258–276 (ALQIGAGLSAANIIEDPSD) lie on the Periplasmic side of the membrane. Residues 277-296 (WTIVGIVSVLTLAFIFSAIS) traverse the membrane as a helical segment. The Cytoplasmic portion of the chain corresponds to 297–299 (GVG). The chain crosses the membrane as a helical span at residues 300-323 (KGIQYLSNANMVLAALLAIFVFVV). Residues Ser306 and Met310 each contribute to the Na(+) site. Residues 324-365 (GPTVSILNLLPGSIGNYLSNFFQMAGRTAMSADGTAGEWLGS) are Periplasmic-facing. Residues 366–386 (WTIFYWAWWISWSPFVGMFLA) traverse the membrane as a helical segment. 373-377 (WWISW) is a glycine betaine binding site. The Cytoplasmic segment spans residues 387 to 396 (RISRGRSIRE). The helical transmembrane segment at 397 to 417 (FILGVLLVPAGVSTVWFSIFG) threads the bilayer. The Periplasmic segment spans residues 418–451 (GTAIVFEQNGESIWGDGAAEEQLFGLLHALPGGQ). A helical membrane pass occupies residues 452–476 (IMGIIAMILLGTFFITSADSASTVM). Over 477 to 489 (GTMSQHGQLEANK) the chain is Cytoplasmic. Residues 490 to 510 (WVTAAWGVATAAIGLTLLLSG) traverse the membrane as a helical segment. Topologically, residues 511-520 (GDNALSNLQN) are periplasmic. The chain crosses the membrane as a helical span at residues 521 to 541 (VTIVAATPFLFVVIGLMFALV). The Cytoplasmic portion of the chain corresponds to 542-595 (KDLSNDVIYLEYREQQRFNARLARERRVHNEHRKRELAAKRRRERKASGAGKRR). A disordered region spans residues 570–595 (HNEHRKRELAAKRRRERKASGAGKRR). The span at 581–595 (KRRRERKASGAGKRR) shows a compositional bias: basic residues.

Belongs to the BCCT transporter (TC 2.A.15) family. As to quaternary structure, homotrimer. The monomer can accumulate glycine betaine, but trimerization is required to properly respond to osmotic stress.

It localises to the cell inner membrane. With respect to regulation, uptake is activated by hyperosmotic stress. Osmoresponsive activation is triggered by a change in the internal K(+) concentration. In addition, shows a pronounced chill stimulation, at temperatures around 10 degrees Celsius. Chill activation may be influenced by the membrane lipid composition. Uptake is completely abolished by the uncoupler CCCP, and to a different extent by the ionophores valinomycin and nigericin. Its function is as follows. Involved in response to osmotic stress. High-affinity glycine betaine-specific uptake system, which couples the uptake of glycine betaine to the symport of two Na(+) ions. Transport is driven both by the Na(+) gradient and by the electrical potential. In addition, functions both as an osmosensor and as an osmoregulator that transduces signal to the catalytic part of the carrier protein, which adapts its activity to the extent of osmotic stress. The sequence is that of Glycine betaine transporter BetP from Corynebacterium glutamicum (strain ATCC 13032 / DSM 20300 / JCM 1318 / BCRC 11384 / CCUG 27702 / LMG 3730 / NBRC 12168 / NCIMB 10025 / NRRL B-2784 / 534).